Consider the following 327-residue polypeptide: Beta-1,4-galactosyltransferase 7 (327 aa).

Residues 1 to 30 (MFPSRRKAAQLPWEDGRSGLLSGGLPRKCS) are Cytoplasmic-facing. The chain crosses the membrane as a helical; Signal-anchor for type II membrane protein span at residues 31–51 (VFHLFVACLSLGFFSLLWLQL). Topologically, residues 52–327 (SCSGDVARAV…KTATPWCTFS (276 aa)) are lumenal. The disordered stretch occupies residues 63 to 87 (GQGQETSGPPRACPPEPPPEHWEED). Residues 100–104 (PFRER) and 139–141 (FNR) contribute to the UDP-alpha-D-galactose site. N-linked (GlcNAc...) asparagine glycosylation is present at Asn154. Residues 164 to 165 (VD), Tyr194, and Trp224 contribute to the UDP-alpha-D-galactose site. Asp165 is a Mn(2+) binding site. 226 to 229 (REDD) is a binding site for N-acetyl-D-glucosamine. Residue His257 participates in Mn(2+) binding. UDP-alpha-D-galactose-binding positions include 257-259 (HLH) and Arg266. Cys316 and Cys324 are disulfide-bonded.

It belongs to the glycosyltransferase 7 family. Mn(2+) is required as a cofactor. As to expression, high expression in heart, pancreas and liver, medium in placenta and kidney, low in brain, skeletal muscle and lung.

It localises to the golgi apparatus. The protein localises to the golgi stack membrane. The enzyme catalyses 3-O-(beta-D-xylosyl)-L-seryl-[protein] + UDP-alpha-D-galactose = 3-O-(beta-D-galactosyl-(1-&gt;4)-beta-D-xylosyl)-L-seryl-[protein] + UDP + H(+). It functions in the pathway protein modification; protein glycosylation. Functionally, required for the biosynthesis of the tetrasaccharide linkage region of proteoglycans, especially for small proteoglycans in skin fibroblasts. This chain is Beta-1,4-galactosyltransferase 7 (B4GALT7), found in Homo sapiens (Human).